Consider the following 115-residue polypeptide: Holo-[acyl-carrier-protein] synthase (115 aa).

Aspartate 6 and glutamate 51 together coordinate Mg(2+).

This sequence belongs to the P-Pant transferase superfamily. AcpS family. It depends on Mg(2+) as a cofactor.

Its subcellular location is the cytoplasm. The enzyme catalyses apo-[ACP] + CoA = holo-[ACP] + adenosine 3',5'-bisphosphate + H(+). Functionally, transfers the 4'-phosphopantetheine moiety from coenzyme A to a Ser of acyl-carrier-protein. The chain is Holo-[acyl-carrier-protein] synthase from Campylobacter jejuni (strain RM1221).